The chain runs to 239 residues: Tetraspanin-9 (239 aa).

The next 3 membrane-spanning stretches (helical) occupy residues 14 to 34 (FLFNLIFWLCGCGLLGVGIWL), 56 to 76 (LVIAIGTIVMVTGFLGCLGAI), and 86 to 106 (FFIVLLIILLAELILIILFFV). 2 N-linked (GlcNAc...) asparagine glycosylation sites follow: Asn-180 and Asn-181. A helical membrane pass occupies residues 204–224 (VLGTVGMCLLITQILGMAFSM).

Belongs to the tetraspanin (TM4SF) family. Found in a complex with GP6. In terms of processing, glycosylated.

The protein localises to the membrane. The sequence is that of Tetraspanin-9 (TSPAN9) from Ovis aries (Sheep).